Consider the following 782-residue polypeptide: Protein phosphatase 1 regulatory subunit 12C (782 aa).

Low complexity-rich tracts occupy residues 1–19 and 77–88; these read MSGEDGPAAGPGAAAAAAA and DPGPGSGAASDP. Disordered stretches follow at residues 1 to 45 and 77 to 98; these read MSGE…GERR and DPGPGSGAASDPAVPPPARAVL. Ser2 is subject to N-acetylserine. ANK repeat units lie at residues 104–133, 137–166, 230–259, and 263–292; these read DGISALHQACIDENLEVVRFLVEQGATVNQ, EGWTPLHVAASCGYLDIARYLLSHGANIAA, TGASALHVAAAKGYIEVMRLLLQAGYDTEL, and DGWTPLHAAAHWGVEDACRLLAEHGGGMDS. Positions 301-332 form a coiled coil; it reads CDLADEDVMNLLEELAQKQEDLRNQKEGSQGR. The disordered stretch occupies residues 321-685; the sequence is DLRNQKEGSQ…HEEPDGGFRK (365 aa). Over residues 332-341 the composition is skewed to polar residues; the sequence is RGQESQVPSS. The span at 353–369 shows a compositional bias: basic and acidic residues; it reads SSREKISLQDLSKERRP. Residues 401-413 are compositionally biased toward low complexity; it reads VSSPVSSNPKSPV. Phosphoserine is present on residues Ser403, Ser411, Ser431, Ser454, and Ser509. Polar residues predominate over residues 451–465; the sequence is RSASSSLLEKASTQA. Residues 537 to 546 are compositionally biased toward basic and acidic residues; it reads VRDEESESQR. Positions 547-557 are enriched in basic residues; that stretch reads KARSRLMRQSR. Thr560 is subject to Phosphothreonine. Ser647 bears the Phosphoserine mark. Residues 664 to 685 are compositionally biased toward basic and acidic residues; that stretch reads SQRDLVLESKQEHEEPDGGFRK. A coiled-coil region spans residues 681 to 782; it reads GGFRKMYTEL…LIRVISKLSK (102 aa).

As to quaternary structure, PP1 comprises a catalytic subunit, PPP1CA, PPP1CB or PPP1CC, and one or several targeting or regulatory subunits. PPP1R12C mediates binding to myosin. Interacts via its N-terminus with PPP1CB. Interacts with IL16. Interacts with the coiled-coil domain of MPRIP. Interacts with NOD2. Post-translationally, phosphorylation at Thr-560 is essential for its interaction with PPP1CB.

The protein localises to the cytoplasm. It is found in the cytoskeleton. The protein resides in the stress fiber. Regulates myosin phosphatase activity. This is Protein phosphatase 1 regulatory subunit 12C from Mus musculus (Mouse).